Consider the following 381-residue polypeptide: Peptidoglycan glycosyltransferase MrdB (381 aa).

A run of 10 helical transmembrane segments spans residues 11–31, 40–60, 66–86, 102–122, 132–152, 156–176, 180–200, 263–283, 297–317, and 328–348; these read FDLL…LLIF, KQGV…FIPF, WLFA…FMGS, ITLQ…AHLI, YDWG…ALIL, DLGT…IVGL, VWLP…HFLH, FGFL…LHLF, IVAL…IAMT, and LPLF…FAIL.

The protein belongs to the SEDS family. MrdB/RodA subfamily.

The protein localises to the cell inner membrane. It catalyses the reaction [GlcNAc-(1-&gt;4)-Mur2Ac(oyl-L-Ala-gamma-D-Glu-L-Lys-D-Ala-D-Ala)](n)-di-trans,octa-cis-undecaprenyl diphosphate + beta-D-GlcNAc-(1-&gt;4)-Mur2Ac(oyl-L-Ala-gamma-D-Glu-L-Lys-D-Ala-D-Ala)-di-trans,octa-cis-undecaprenyl diphosphate = [GlcNAc-(1-&gt;4)-Mur2Ac(oyl-L-Ala-gamma-D-Glu-L-Lys-D-Ala-D-Ala)](n+1)-di-trans,octa-cis-undecaprenyl diphosphate + di-trans,octa-cis-undecaprenyl diphosphate + H(+). Its pathway is cell wall biogenesis; peptidoglycan biosynthesis. Functionally, peptidoglycan polymerase that is essential for cell wall elongation. This chain is Peptidoglycan glycosyltransferase MrdB, found in Helicobacter pylori (strain J99 / ATCC 700824) (Campylobacter pylori J99).